Reading from the N-terminus, the 166-residue chain is 3-isopropylmalate dehydratase small subunit (166 aa).

It belongs to the LeuD family. LeuD type 2 subfamily. As to quaternary structure, heterodimer of LeuC and LeuD.

It carries out the reaction (2R,3S)-3-isopropylmalate = (2S)-2-isopropylmalate. The protein operates within amino-acid biosynthesis; L-leucine biosynthesis; L-leucine from 3-methyl-2-oxobutanoate: step 2/4. Functionally, catalyzes the isomerization between 2-isopropylmalate and 3-isopropylmalate, via the formation of 2-isopropylmaleate. This Nautilia profundicola (strain ATCC BAA-1463 / DSM 18972 / AmH) protein is 3-isopropylmalate dehydratase small subunit.